Here is a 318-residue protein sequence, read N- to C-terminus: Aldehyde oxidoreductase FAD-binding subunit PaoB (318 aa).

The FAD-binding PCMH-type domain maps to 1-223 (MKAFTYERVN…VAVTLPPPLG (223 aa)). Residues 26–34 (KFIAGGTNL) and T108 contribute to the FAD site. Residues C119, C129, C138, and C157 each contribute to the [4Fe-4S] cluster site. Residues D164, I213, and K230 each contribute to the FAD site.

As to quaternary structure, heterotrimer composed of PaoA, PaoB and PaoC. Requires FAD as cofactor. The cofactor is [4Fe-4S] cluster.

The protein localises to the periplasm. The catalysed reaction is an aldehyde + A + H2O = a carboxylate + AH2 + H(+). The complex requires PaoD for activity. In terms of biological role, oxidizes aldehydes to the corresponding carboxylic acids with a preference for aromatic aldehydes. It might play a role in the detoxification of aldehydes to avoid cell damage. The polypeptide is Aldehyde oxidoreductase FAD-binding subunit PaoB (Escherichia coli (strain K12)).